The following is a 690-amino-acid chain: UvrABC system protein B (690 aa).

Residues 39–422 (EGLDDGLSFQ…EQQHAGQVVE (384 aa)) enclose the Helicase ATP-binding domain. 52 to 59 (GVTGSGKT) serves as a coordination point for ATP. The Beta-hairpin signature appears at 105-128 (YYDYYQPEAYVPSRDLFIEKDSSI). One can recognise a Helicase C-terminal domain in the interval 443-596 (QVDDLLAEIG…QIAFNLEHGI (154 aa)). Positions 640-675 (AREIKRLEKSMMECAKNLEFEKAAAARDDLFRLRER) constitute a UVR domain.

Belongs to the UvrB family. In terms of assembly, forms a heterotetramer with UvrA during the search for lesions. Interacts with UvrC in an incision complex.

It localises to the cytoplasm. The UvrABC repair system catalyzes the recognition and processing of DNA lesions. A damage recognition complex composed of 2 UvrA and 2 UvrB subunits scans DNA for abnormalities. Upon binding of the UvrA(2)B(2) complex to a putative damaged site, the DNA wraps around one UvrB monomer. DNA wrap is dependent on ATP binding by UvrB and probably causes local melting of the DNA helix, facilitating insertion of UvrB beta-hairpin between the DNA strands. Then UvrB probes one DNA strand for the presence of a lesion. If a lesion is found the UvrA subunits dissociate and the UvrB-DNA preincision complex is formed. This complex is subsequently bound by UvrC and the second UvrB is released. If no lesion is found, the DNA wraps around the other UvrB subunit that will check the other stand for damage. The protein is UvrABC system protein B of Dechloromonas aromatica (strain RCB).